The following is a 769-amino-acid chain: 5-methyltetrahydropteroyltriglutamate--homocysteine methyltransferase (769 aa).

5-methyltetrahydropteroyltri-L-glutamate is bound by residues 17-20 (RELK) and K118. Residues 441 to 443 (IGS) and E494 each bind L-homocysteine. Residues 441 to 443 (IGS) and E494 contribute to the L-methionine site. 5-methyltetrahydropteroyltri-L-glutamate contacts are provided by residues 525-526 (RC) and W571. Position 609 (D609) interacts with L-homocysteine. D609 lines the L-methionine pocket. E615 contributes to the 5-methyltetrahydropteroyltri-L-glutamate binding site. The Zn(2+) site is built by H651, C653, and E675. The active-site Proton donor is H705. Residue C737 coordinates Zn(2+).

The protein belongs to the vitamin-B12 independent methionine synthase family. It depends on Zn(2+) as a cofactor.

It catalyses the reaction 5-methyltetrahydropteroyltri-L-glutamate + L-homocysteine = tetrahydropteroyltri-L-glutamate + L-methionine. Its pathway is amino-acid biosynthesis; L-methionine biosynthesis via de novo pathway; L-methionine from L-homocysteine (MetE route): step 1/1. In terms of biological role, catalyzes the transfer of a methyl group from 5-methyltetrahydrofolate to homocysteine resulting in methionine formation. The sequence is that of 5-methyltetrahydropteroyltriglutamate--homocysteine methyltransferase from Blochmanniella floridana.